The chain runs to 478 residues: Protein nucleotidyltransferase YdiU (478 aa).

8 residues coordinate ATP: Gly-84, Gly-86, Arg-87, Lys-107, Asp-119, Gly-120, Arg-170, and Arg-177. The active-site Proton acceptor is Asp-246. Residues Asn-247 and Asp-256 each coordinate Mg(2+). Asp-256 is an ATP binding site.

This sequence belongs to the SELO family. Mg(2+) serves as cofactor. Mn(2+) is required as a cofactor.

The catalysed reaction is L-seryl-[protein] + ATP = 3-O-(5'-adenylyl)-L-seryl-[protein] + diphosphate. It carries out the reaction L-threonyl-[protein] + ATP = 3-O-(5'-adenylyl)-L-threonyl-[protein] + diphosphate. It catalyses the reaction L-tyrosyl-[protein] + ATP = O-(5'-adenylyl)-L-tyrosyl-[protein] + diphosphate. The enzyme catalyses L-histidyl-[protein] + UTP = N(tele)-(5'-uridylyl)-L-histidyl-[protein] + diphosphate. The catalysed reaction is L-seryl-[protein] + UTP = O-(5'-uridylyl)-L-seryl-[protein] + diphosphate. It carries out the reaction L-tyrosyl-[protein] + UTP = O-(5'-uridylyl)-L-tyrosyl-[protein] + diphosphate. In terms of biological role, nucleotidyltransferase involved in the post-translational modification of proteins. It can catalyze the addition of adenosine monophosphate (AMP) or uridine monophosphate (UMP) to a protein, resulting in modifications known as AMPylation and UMPylation. In Escherichia coli O1:K1 / APEC, this protein is Protein nucleotidyltransferase YdiU.